The primary structure comprises 115 residues: MKKKHRIKKNDEFQTVFQKGKSTANRQFVVYQLDKEEQPNFRIGLSVSKKIGNAVVRNRIKRMIRQSITELKDEIDSGKDFVIIARKPCAEMTYEELKKSLIHVFKRSGMKRIKK.

This sequence belongs to the RnpA family. In terms of assembly, consists of a catalytic RNA component (M1 or rnpB) and a protein subunit.

It carries out the reaction Endonucleolytic cleavage of RNA, removing 5'-extranucleotides from tRNA precursor.. Functionally, RNaseP catalyzes the removal of the 5'-leader sequence from pre-tRNA to produce the mature 5'-terminus. It can also cleave other RNA substrates such as 4.5S RNA. The protein component plays an auxiliary but essential role in vivo by binding to the 5'-leader sequence and broadening the substrate specificity of the ribozyme. This is Ribonuclease P protein component from Bacillus cereus (strain AH187).